The following is a 356-amino-acid chain: Homoserine O-acetyltransferase (356 aa).

The region spanning 50-335 is the AB hydrolase-1 domain; sequence NVILVCHALT…DEPYGHDAFL (286 aa). The Nucleophile role is filled by Ser-146. Residue Arg-215 participates in substrate binding. Catalysis depends on residues Asp-302 and His-331. Asp-332 serves as a coordination point for substrate.

The protein belongs to the AB hydrolase superfamily. MetX family. In terms of assembly, homodimer.

The protein resides in the cytoplasm. It carries out the reaction L-homoserine + acetyl-CoA = O-acetyl-L-homoserine + CoA. Its pathway is amino-acid biosynthesis; L-methionine biosynthesis via de novo pathway; O-acetyl-L-homoserine from L-homoserine: step 1/1. Its function is as follows. Transfers an acetyl group from acetyl-CoA to L-homoserine, forming acetyl-L-homoserine. This is Homoserine O-acetyltransferase from Chlorobaculum tepidum (strain ATCC 49652 / DSM 12025 / NBRC 103806 / TLS) (Chlorobium tepidum).